Here is an 873-residue protein sequence, read N- to C-terminus: Envelope glycoprotein B (873 aa).

An N-terminal signal peptide occupies residues 1–21 (MASLKMLICVCVAILIPSTLS). Residues 22-740 (QDSHGIAGII…SGIASFLSNP (719 aa)) are Virion surface-facing. 5 disulfide bridges follow: cysteine 67-cysteine 525, cysteine 84-cysteine 481, cysteine 157-cysteine 219, cysteine 311-cysteine 359, and cysteine 548-cysteine 598. Residues asparagine 92 and asparagine 111 are each glycosylated (N-linked (GlcNAc...) asparagine; by host). Residues 124-130 (TWALFSR) are involved in fusion and/or binding to host membrane. Residue asparagine 201 is glycosylated (N-linked (GlcNAc...) asparagine; by host). The interval 206-213 (HQTLGYRT) is involved in fusion and/or binding to host membrane. N-linked (GlcNAc...) asparagine; by host glycans are attached at residues asparagine 252 and asparagine 350. The interval 418-447 (QNHLPRGRERRQAAGRRTASLQSGPQGDRI) is disordered. N-linked (GlcNAc...) asparagine; by host glycosylation is found at asparagine 569, asparagine 625, and asparagine 639. Hydrophobic membrane proximal region stretches follow at residues 684-738 (IDTV…SFLS) and 715-734 (LGTVVMTAAAAVISTVSGIA). A helical transmembrane segment spans residues 741-761 (FAALGIGIAVVVSIILGLLAF). Residues 762 to 873 (KYVMNLKSNP…PSWAEESEDE (112 aa)) lie on the Intravirion side of the membrane. Residues 781 to 807 (PPAGTPPRPSRRYYKDEEEVEEDSDED) form a disordered region. Positions 796 to 807 (DEEEVEEDSDED) are enriched in acidic residues. The Internalization motif motif lies at 858 to 861 (YPLL).

It belongs to the herpesviridae glycoprotein B family. Homotrimer; disulfide-linked. Binds to heparan sulfate proteoglycans. Interacts with gH/gL heterodimer. Post-translationally, a proteolytic cleavage by host furin generates two subunits that remain linked by disulfide bonds.

It is found in the virion membrane. The protein resides in the host cell membrane. Its subcellular location is the host endosome membrane. It localises to the host Golgi apparatus membrane. In terms of biological role, envelope glycoprotein that forms spikes at the surface of virion envelope. Essential for the initial attachment to heparan sulfate moieties of the host cell surface proteoglycans. Involved in fusion of viral and cellular membranes leading to virus entry into the host cell. Following initial binding to its host receptors, membrane fusion is mediated by the fusion machinery composed at least of gB and the heterodimer gH/gL. May be involved in the fusion between the virion envelope and the outer nuclear membrane during virion egress. The polypeptide is Envelope glycoprotein B (Infectious laryngotracheitis virus (strain 632) (ILTV)).